The sequence spans 349 residues: Isopentenyl-diphosphate delta-isomerase (349 aa).

6-7 (RK) contacts substrate. FMN-binding positions include 62 to 64 (AMT), Ser-93, and Asn-122. Gln-152 is a binding site for substrate. Residue Glu-153 coordinates Mg(2+). Residues Lys-184, Thr-214, 258–259 (GG), and 280–281 (AG) contribute to the FMN site.

This sequence belongs to the IPP isomerase type 2 family. Homooctamer. Dimer of tetramers. FMN serves as cofactor. It depends on NADPH as a cofactor. The cofactor is Mg(2+).

It is found in the cytoplasm. It catalyses the reaction isopentenyl diphosphate = dimethylallyl diphosphate. Functionally, involved in the biosynthesis of isoprenoids. Catalyzes the 1,3-allylic rearrangement of the homoallylic substrate isopentenyl (IPP) to its allylic isomer, dimethylallyl diphosphate (DMAPP). In Bacillus cereus (strain AH820), this protein is Isopentenyl-diphosphate delta-isomerase.